The chain runs to 104 residues: Large ribosomal subunit protein uL15z (104 aa).

The protein belongs to the universal ribosomal protein uL15 family.

The chain is Large ribosomal subunit protein uL15z (RPL27AA) from Arabidopsis thaliana (Mouse-ear cress).